The primary structure comprises 754 residues: LON peptidase N-terminal domain and RING finger protein 2 (754 aa).

2 TPR repeats span residues 23 to 58 (IAQRLEEGDEAFRAGDYEMAAELFRSMLAGLAQPDR) and 59 to 91 (GLCLRLGDALARAGRLPEALGAFRGAARLGALR). Positions 112 to 136 (PLSAENPGGEPEAPGEGGPAPEPRA) are disordered. Over residues 115-125 (AENPGGEPEAP) the composition is skewed to low complexity. TPR repeat units follow at residues 197–230 (LRRLAGQARSLQRQQQPEAALLRCDQALELAPDD), 231–264 (NSLLLLRAELYLTMKNYEQALQDASAACQNEPLL), and 266–298 (KGHQVKAQALSGLGRSKEVLKEFLYCLALNPEC). Positions 398-439 (GLKRQFPDDVEDAPDLNAPGKIPKKDLSLQRSPNSETEESQG) are disordered. Positions 426–439 (LQRSPNSETEESQG) are enriched in polar residues. A TPR 6 repeat occupies 447 to 483 (FECALCMRLLFEPVTTPCGHTFCLKCLERCLDHAPHC). An RING-type zinc finger spans residues 449-487 (CALCMRLLFEPVTTPCGHTFCLKCLERCLDHAPHCPLCK). Residues 528 to 737 (MSELSNLTRD…AIRRILVIIT (210 aa)) form the Lon N-terminal domain.

The protein is LON peptidase N-terminal domain and RING finger protein 2 (LONRF2) of Homo sapiens (Human).